Consider the following 377-residue polypeptide: Succinyl-diaminopimelate desuccinylase (377 aa).

Histidine 68 is a Zn(2+) binding site. Residue aspartate 70 is part of the active site. A Zn(2+)-binding site is contributed by aspartate 101. The active-site Proton acceptor is glutamate 135. Residues glutamate 136, glutamate 164, and histidine 350 each coordinate Zn(2+).

It belongs to the peptidase M20A family. DapE subfamily. In terms of assembly, homodimer. The cofactor is Zn(2+). Requires Co(2+) as cofactor.

The catalysed reaction is N-succinyl-(2S,6S)-2,6-diaminopimelate + H2O = (2S,6S)-2,6-diaminopimelate + succinate. Its pathway is amino-acid biosynthesis; L-lysine biosynthesis via DAP pathway; LL-2,6-diaminopimelate from (S)-tetrahydrodipicolinate (succinylase route): step 3/3. Its function is as follows. Catalyzes the hydrolysis of N-succinyl-L,L-diaminopimelic acid (SDAP), forming succinate and LL-2,6-diaminopimelate (DAP), an intermediate involved in the bacterial biosynthesis of lysine and meso-diaminopimelic acid, an essential component of bacterial cell walls. The chain is Succinyl-diaminopimelate desuccinylase from Acinetobacter baumannii (strain SDF).